Consider the following 204-residue polypeptide: NADH-quinone oxidoreductase subunit C (204 aa).

The protein belongs to the complex I 30 kDa subunit family. NDH-1 is composed of 14 different subunits. Subunits NuoB, C, D, E, F, and G constitute the peripheral sector of the complex.

The protein resides in the cell inner membrane. It catalyses the reaction a quinone + NADH + 5 H(+)(in) = a quinol + NAD(+) + 4 H(+)(out). In terms of biological role, NDH-1 shuttles electrons from NADH, via FMN and iron-sulfur (Fe-S) centers, to quinones in the respiratory chain. The immediate electron acceptor for the enzyme in this species is believed to be ubiquinone. Couples the redox reaction to proton translocation (for every two electrons transferred, four hydrogen ions are translocated across the cytoplasmic membrane), and thus conserves the redox energy in a proton gradient. The chain is NADH-quinone oxidoreductase subunit C from Rhodopseudomonas palustris (strain ATCC BAA-98 / CGA009).